The chain runs to 180 residues: MKGGKRVQTARPNRINSEIRAQEVRLTGLEGEQLGIVSLREALEKAEEAGVDLVEISPNAEPPVCRIMDYGKFLYEKSKSSKEQKKKQKVIQVKEIKFRPGTDEGDYQVKLRSLIRFLEEGDKAKITLRFRGREMAHQQIGMEVLNRVKNDLQELAVVESFPTKIEGRQMIMVLAPKKKQ.

Belongs to the IF-3 family. In terms of assembly, monomer.

It is found in the cytoplasm. Functionally, IF-3 binds to the 30S ribosomal subunit and shifts the equilibrium between 70S ribosomes and their 50S and 30S subunits in favor of the free subunits, thus enhancing the availability of 30S subunits on which protein synthesis initiation begins. In Salmonella typhi, this protein is Translation initiation factor IF-3.